Reading from the N-terminus, the 96-residue chain is Large ribosomal subunit protein bL28 (96 aa).

The protein belongs to the bacterial ribosomal protein bL28 family.

The chain is Large ribosomal subunit protein bL28 from Methylobacterium sp. (strain 4-46).